The chain runs to 543 residues: Excitatory amino acid transporter 1 (543 aa).

Topologically, residues 1-47 (MTKSNGEEPRMGSRMERFQQGVRKRTLLAKKKVQNITKEDVKSYLFR) are cytoplasmic. Residues 48–68 (NAFVLLTVSAVIVGTILGFAL) form a helical membrane-spanning segment. Topologically, residues 69–86 (RPYKMSYREVKYFSFPGE) are extracellular. Residues 87–108 (LLMRMLQMLVLPLIISSLVTGM) form a helical membrane-spanning segment. The Cytoplasmic portion of the chain corresponds to 109–122 (AALDSKASGKMGMR). Residues 123–145 (AVVYYMTTTIIAVVIGIIIVIII) traverse the membrane as a helical segment. The Extracellular segment spans residues 146–236 (HPGKGTKENM…IREEMVPVPG (91 aa)). A helical transmembrane segment spans residues 237 to 260 (SVNGVNALGLVVFSMCFGFVIGNM). The Cytoplasmic portion of the chain corresponds to 261–269 (KEQGQALRE). Residues 270 to 297 (FFDSLNEAIMRLVAVIMWYAPLGILFLI) form a helical membrane-spanning segment. The Extracellular portion of the chain corresponds to 298-318 (AGKILEMEDMGVIGGQLAMYT). Residues 319 to 340 (VTVIVGLLIHAVIVLPLLYFLV) traverse the membrane as a helical segment. At 341 to 345 (TRKNP) the chain is on the cytoplasmic side. Residues 346 to 376 (WVFIGGLLQALITALGTSSSSATLPITFKCL) constitute an intramembrane region (discontinuously helical). Residue 363–365 (SSS) participates in L-aspartate binding. Residues 377-385 (EENNGVDKR) are Cytoplasmic-facing. The chain crosses the membrane as a helical span at residues 386–412 (ITRFVLPVGATINMDGTALYEALAAIF). Glycine 394, threonine 396, and asparagine 398 together coordinate Na(+). Threonine 402 lines the L-aspartate pocket. At 413–425 (IAQVNNFDLNFGQ) the chain is on the extracellular side. Residues 426 to 459 (IITISITATAASIGAAGIPQAGLVTMVIVLTSVG) constitute an intramembrane region (discontinuously helical). An L-aspartate-binding site is contributed by 443–447 (IPQAG). The Extracellular segment spans residues 460–472 (LPTDDITLIIAVD). Residues 473-494 (WFLDRLRTTTNVLGDSLGAGIV) traverse the membrane as a helical segment. The L-aspartate site is built by aspartate 476 and asparagine 483. Residues asparagine 483 and aspartate 487 each contribute to the Na(+) site. Residues 495-543 (EHLSRHELKNRDVEMGNSVIEENEMKKPYQLIAQDNEPEKPVADSETKM) lie on the Cytoplasmic side of the membrane. At serine 512 the chain carries Phosphoserine. A disordered region spans residues 522 to 543 (PYQLIAQDNEPEKPVADSETKM). A compositionally biased stretch (basic and acidic residues) spans 531 to 543 (EPEKPVADSETKM).

This sequence belongs to the dicarboxylate/amino acid:cation symporter (DAACS) (TC 2.A.23) family. SLC1A3 subfamily. As to quaternary structure, homotrimer. Glycosylated. Detected in brain and cerebellum. Both isoform GLAST-1 and GLAST-1A are expressed in bone and brain. In brain isoform GLAST-1 is highly enriched in the Purkinje cell layer in cerebellum.

Its subcellular location is the cell membrane. It carries out the reaction K(+)(in) + L-glutamate(out) + 3 Na(+)(out) + H(+)(out) = K(+)(out) + L-glutamate(in) + 3 Na(+)(in) + H(+)(in). It catalyses the reaction K(+)(in) + L-aspartate(out) + 3 Na(+)(out) + H(+)(out) = K(+)(out) + L-aspartate(in) + 3 Na(+)(in) + H(+)(in). The catalysed reaction is D-aspartate(out) + K(+)(in) + 3 Na(+)(out) + H(+)(out) = D-aspartate(in) + K(+)(out) + 3 Na(+)(in) + H(+)(in). In terms of biological role, sodium-dependent, high-affinity amino acid transporter that mediates the uptake of L-glutamate and also L-aspartate and D-aspartate. Functions as a symporter that transports one amino acid molecule together with two or three Na(+) ions and one proton, in parallel with the counter-transport of one K(+) ion. Plays a redundant role in the rapid removal of released glutamate from the synaptic cleft, which is essential for terminating the postsynaptic action of glutamate. The polypeptide is Excitatory amino acid transporter 1 (Slc1a3) (Rattus norvegicus (Rat)).